A 109-amino-acid chain; its full sequence is MEPNSPKKIQFAVPVFQSQIAPEAAEQIRKRRPTPASLVILNEHNPPEIDDKRVPNTQGELQNASPKQRKQSVYTPPTIKGVKHLKGQNESAFPEEEEGTNEREEQRDH.

Residues 25–109 (AEQIRKRRPT…TNEREEQRDH (85 aa)) form a disordered region. The span at 45-54 (NPPEIDDKRV) shows a compositional bias: basic and acidic residues. A compositionally biased stretch (polar residues) spans 55-75 (PNTQGELQNASPKQRKQSVYT). Residues 100–109 (TNEREEQRDH) show a composition bias toward basic and acidic residues.

Belongs to the protein phosphatase inhibitor 1 family.

It localises to the cytoplasm. Its function is as follows. May increase cell susceptibility to TNF-induced apoptosis. This is Protein phosphatase 1 regulatory subunit 1C (PPP1R1C) from Pongo abelii (Sumatran orangutan).